Consider the following 528-residue polypeptide: Peptide chain release factor 3 (528 aa).

A tr-type G domain is found at 11–279; the sequence is SRRRTFAIIS…GLVDWAPSPQ (269 aa). GTP contacts are provided by residues 20–27, 88–92, and 142–145; these read SHPDAGKT, DTPGH, and NKLD.

The protein belongs to the TRAFAC class translation factor GTPase superfamily. Classic translation factor GTPase family. PrfC subfamily.

The protein localises to the cytoplasm. Functionally, increases the formation of ribosomal termination complexes and stimulates activities of RF-1 and RF-2. It binds guanine nucleotides and has strong preference for UGA stop codons. It may interact directly with the ribosome. The stimulation of RF-1 and RF-2 is significantly reduced by GTP and GDP, but not by GMP. The sequence is that of Peptide chain release factor 3 from Pseudoalteromonas atlantica (strain T6c / ATCC BAA-1087).